We begin with the raw amino-acid sequence, 123 residues long: Thioredoxin domain-containing protein 17 (123 aa).

In terms of domain architecture, Thioredoxin spans 41–123 (SWCPDCVTAE…DLVRMMFTED (83 aa)). Catalysis depends on nucleophile residues cysteine 43 and cysteine 46. Cysteine 43 and cysteine 46 are oxidised to a cystine.

Belongs to the thioredoxin family. As to expression, predominantly expressed in liver, brain and muscle. Also expressed in kidney, intestine, skin, stomach, gill and head kidney.

Its subcellular location is the cytoplasm. Disulfide reductase. May participate in various redox reactions through the reversible oxidation of its active center dithiol to a disulfide and catalyze dithiol-disulfide exchange reactions. Has peroxidase activity and may contribute to the elimination of cellular hydrogen peroxide. May function as an antioxidant involved in response to viral infection. The polypeptide is Thioredoxin domain-containing protein 17 (Epinephelus coioides (Orange-spotted grouper)).